Here is a 436-residue protein sequence, read N- to C-terminus: Enolase (436 aa).

Gln-167 contacts (2R)-2-phosphoglycerate. Glu-209 (proton donor) is an active-site residue. 3 residues coordinate Mg(2+): Asp-246, Glu-291, and Asp-318. (2R)-2-phosphoglycerate is bound by residues Lys-343, Arg-372, Ser-373, and Lys-394. Residue Lys-343 is the Proton acceptor of the active site.

This sequence belongs to the enolase family. As to quaternary structure, component of the RNA degradosome, a multiprotein complex involved in RNA processing and mRNA degradation. Requires Mg(2+) as cofactor.

It is found in the cytoplasm. It localises to the secreted. Its subcellular location is the cell surface. It catalyses the reaction (2R)-2-phosphoglycerate = phosphoenolpyruvate + H2O. Its pathway is carbohydrate degradation; glycolysis; pyruvate from D-glyceraldehyde 3-phosphate: step 4/5. Functionally, catalyzes the reversible conversion of 2-phosphoglycerate (2-PG) into phosphoenolpyruvate (PEP). It is essential for the degradation of carbohydrates via glycolysis. The chain is Enolase from Haemophilus influenzae (strain PittGG).